The chain runs to 190 residues: Protein LZIC (190 aa).

A coiled-coil region spans residues 6 to 64 (TTETSKLKQNLEEQLDRLMQQLQDLEECREELDADEYEETKKETLEQLSEINDSLKKIM).

Belongs to the CTNNBIP1 family. In terms of assembly, does not interact with CTNNB1.

This is Protein LZIC (LZIC) from Gallus gallus (Chicken).